The sequence spans 494 residues: UPF0371 protein SpyM3_1021 (494 aa).

Belongs to the UPF0371 family.

This is UPF0371 protein SpyM3_1021 from Streptococcus pyogenes serotype M3 (strain ATCC BAA-595 / MGAS315).